A 123-amino-acid polypeptide reads, in one-letter code: S-adenosylmethionine decarboxylase proenzyme 2 (123 aa).

S65 serves as the catalytic Schiff-base intermediate with substrate; via pyruvic acid. Residue S65 is modified to Pyruvic acid (Ser); by autocatalysis. The active-site Proton acceptor; for processing activity is the H70. C85 acts as the Proton donor; for catalytic activity in catalysis.

The protein belongs to the prokaryotic AdoMetDC family. Type 1 subfamily. In terms of assembly, heterotetramer of two alpha and two beta chains arranged as a dimer of alpha/beta heterodimers. The cofactor is pyruvate. Post-translationally, is synthesized initially as an inactive proenzyme. Formation of the active enzyme involves a self-maturation process in which the active site pyruvoyl group is generated from an internal serine residue via an autocatalytic post-translational modification. Two non-identical subunits are generated from the proenzyme in this reaction, and the pyruvate is formed at the N-terminus of the alpha chain, which is derived from the carboxyl end of the proenzyme. The post-translation cleavage follows an unusual pathway, termed non-hydrolytic serinolysis, in which the side chain hydroxyl group of the serine supplies its oxygen atom to form the C-terminus of the beta chain, while the remainder of the serine residue undergoes an oxidative deamination to produce ammonia and the pyruvoyl group blocking the N-terminus of the alpha chain.

The enzyme catalyses S-adenosyl-L-methionine + H(+) = S-adenosyl 3-(methylsulfanyl)propylamine + CO2. It participates in amine and polyamine biosynthesis; S-adenosylmethioninamine biosynthesis; S-adenosylmethioninamine from S-adenosyl-L-methionine: step 1/1. Catalyzes the decarboxylation of S-adenosylmethionine to S-adenosylmethioninamine (dcAdoMet), the propylamine donor required for the synthesis of the polyamines spermine and spermidine from the diamine putrescine. The polypeptide is S-adenosylmethionine decarboxylase proenzyme 2 (Bacillus anthracis).